The primary structure comprises 446 residues: Chromosomal replication initiator protein DnaA (446 aa).

The tract at residues 1–92 is domain I, interacts with DnaA modulators; that stretch reads MENISDLWNS…SQAEEEIDLP (92 aa). The domain II stretch occupies residues 93-109; that stretch reads PAKPNAAQDDSNHLPQS. The tract at residues 110-326 is domain III, AAA+ region; the sequence is MLNPKYTFDT…GALIRVVAYS (217 aa). ATP contacts are provided by Gly-154, Gly-156, Lys-157, and Thr-158. The segment at 327 to 446 is domain IV, binds dsDNA; the sequence is SLINKDINAD…QVEEINDILK (120 aa).

Belongs to the DnaA family. In terms of assembly, oligomerizes as a right-handed, spiral filament on DNA at oriC.

Its subcellular location is the cytoplasm. Its function is as follows. Plays an essential role in the initiation and regulation of chromosomal replication. ATP-DnaA binds to the origin of replication (oriC) to initiate formation of the DNA replication initiation complex once per cell cycle. Binds the DnaA box (a 9 base pair repeat at the origin) and separates the double-stranded (ds)DNA. Forms a right-handed helical filament on oriC DNA; dsDNA binds to the exterior of the filament while single-stranded (ss)DNA is stabiized in the filament's interior. The ATP-DnaA-oriC complex binds and stabilizes one strand of the AT-rich DNA unwinding element (DUE), permitting loading of DNA polymerase. After initiation quickly degrades to an ADP-DnaA complex that is not apt for DNA replication. Binds acidic phospholipids. This chain is Chromosomal replication initiator protein DnaA, found in Bacillus anthracis (strain A0248).